We begin with the raw amino-acid sequence, 145 residues long: Hemoglobin subunit beta (145 aa).

One can recognise a Globin domain in the interval 1–145 (MLTAEEKAAV…VANALAHRYH (145 aa)). Threonine 11 is subject to Phosphothreonine. A Phosphoserine modification is found at serine 43. An N6-acetyllysine modification is found at lysine 58. Histidine 62 provides a ligand contact to heme b. At lysine 81 the chain carries N6-acetyllysine. Histidine 91 provides a ligand contact to heme b. Residue cysteine 92 is modified to S-nitrosocysteine.

This sequence belongs to the globin family. As to quaternary structure, heterotetramer of two alpha chains and two beta chains. As to expression, red blood cells.

In terms of biological role, involved in oxygen transport from the lung to the various peripheral tissues. This is Hemoglobin subunit beta (HBB) from Bos mutus grunniens (Wild yak).